A 1573-amino-acid chain; its full sequence is Pentafunctional AROM polypeptide 1 (1573 aa).

The 3-dehydroquinate synthase stretch occupies residues 1-380 (MAEPTKISIL…YEPKASVVSN (380 aa)). Residues 44 to 46 (DTN), 81 to 84 (ENSK), 112 to 114 (GGV), and Asp117 contribute to the NAD(+) site. Arg128 contacts 7-phospho-2-dehydro-3-deoxy-D-arabino-heptonate. 137 to 138 (TT) lines the NAD(+) pocket. The 7-phospho-2-dehydro-3-deoxy-D-arabino-heptonate site is built by Asp144 and Lys150. NAD(+) is bound at residue Lys159. Asn160 serves as a coordination point for 7-phospho-2-dehydro-3-deoxy-D-arabino-heptonate. NAD(+) is bound by residues 177–180 (FIDT) and Asn188. Glu192 is a binding site for Zn(2+). Residues 192-195 (EVIK) and Lys246 each bind 7-phospho-2-dehydro-3-deoxy-D-arabino-heptonate. Catalysis depends on Glu256, which acts as the Proton acceptor; for 3-dehydroquinate synthase activity. Residues 260–264 (RNLLN) and His267 each bind 7-phospho-2-dehydro-3-deoxy-D-arabino-heptonate. Position 267 (His267) interacts with Zn(2+). Catalysis depends on His271, which acts as the Proton acceptor; for 3-dehydroquinate synthase activity. The 7-phospho-2-dehydro-3-deoxy-D-arabino-heptonate site is built by His283 and Lys352. Residue His283 coordinates Zn(2+). Positions 393 to 838 (VIPGVPKDLN…WDALKQKFGV (446 aa)) are EPSP synthase. The For EPSP synthase activity role is filled by Cys820. A shikimate kinase region spans residues 859-1051 (DASIVIIGMR…RRKRLSFFMS (193 aa)). Residue 866–873 (GMRGAGKT) coordinates ATP. A 3-dehydroquinase region spans residues 1052–1273 (LTLTDLRDSG…AAPGQLSAAE (222 aa)). His1175 (proton acceptor; for 3-dehydroquinate dehydratase activity) is an active-site residue. The active-site Schiff-base intermediate with substrate; for 3-dehydroquinate dehydratase activity is Lys1203. Positions 1286–1573 (AKKFAIFGKP…NAVLGTDETK (288 aa)) are shikimate dehydrogenase.

In the N-terminal section; belongs to the sugar phosphate cyclases superfamily. Dehydroquinate synthase family. This sequence in the 2nd section; belongs to the EPSP synthase family. The protein in the 3rd section; belongs to the shikimate kinase family. It in the 4th section; belongs to the type-I 3-dehydroquinase family. In the C-terminal section; belongs to the shikimate dehydrogenase family. Homodimer. Requires Zn(2+) as cofactor.

The protein localises to the cytoplasm. It carries out the reaction 7-phospho-2-dehydro-3-deoxy-D-arabino-heptonate = 3-dehydroquinate + phosphate. The catalysed reaction is 3-dehydroquinate = 3-dehydroshikimate + H2O. The enzyme catalyses shikimate + NADP(+) = 3-dehydroshikimate + NADPH + H(+). It catalyses the reaction shikimate + ATP = 3-phosphoshikimate + ADP + H(+). It carries out the reaction 3-phosphoshikimate + phosphoenolpyruvate = 5-O-(1-carboxyvinyl)-3-phosphoshikimate + phosphate. Its pathway is metabolic intermediate biosynthesis; chorismate biosynthesis; chorismate from D-erythrose 4-phosphate and phosphoenolpyruvate: step 2/7. The protein operates within metabolic intermediate biosynthesis; chorismate biosynthesis; chorismate from D-erythrose 4-phosphate and phosphoenolpyruvate: step 3/7. It functions in the pathway metabolic intermediate biosynthesis; chorismate biosynthesis; chorismate from D-erythrose 4-phosphate and phosphoenolpyruvate: step 4/7. It participates in metabolic intermediate biosynthesis; chorismate biosynthesis; chorismate from D-erythrose 4-phosphate and phosphoenolpyruvate: step 5/7. Its pathway is metabolic intermediate biosynthesis; chorismate biosynthesis; chorismate from D-erythrose 4-phosphate and phosphoenolpyruvate: step 6/7. Functionally, the AROM polypeptide catalyzes 5 consecutive enzymatic reactions in prechorismate polyaromatic amino acid biosynthesis. The polypeptide is Pentafunctional AROM polypeptide 1 (Talaromyces marneffei (strain ATCC 18224 / CBS 334.59 / QM 7333) (Penicillium marneffei)).